We begin with the raw amino-acid sequence, 220 residues long: GTP-binding protein YPT53 (220 aa).

Residues 19–26, 67–71, and 125–128 each bind GTP; these read GESAVGKS, DTAGQ, and NKMD. S-geranylgeranyl cysteine attachment occurs at residues cysteine 218 and cysteine 220. Cysteine 220 is subject to Cysteine methyl ester.

The protein belongs to the small GTPase superfamily. Rab family.

Its subcellular location is the cell membrane. Required for transport in the endocytic pathway and for correct sorting of the vacuolar hydrolases suggesting a possible intersection of the endocytic with the vacuolar sorting pathway. May be involved in recruiting the MON1-CCZ1 complex to membranes enriched in phosphatidylinositol 3-phosphate (PtdIns[3]P) or other charged lipids, leading to recruitment of YPT7. The polypeptide is GTP-binding protein YPT53 (YPT53) (Saccharomyces cerevisiae (strain ATCC 204508 / S288c) (Baker's yeast)).